We begin with the raw amino-acid sequence, 130 residues long: Small ribosomal subunit protein bS6 (130 aa).

The disordered stretch occupies residues V96–E130. A compositionally biased stretch (basic and acidic residues) spans K104–D118. Residues R119–E130 are compositionally biased toward acidic residues.

It belongs to the bacterial ribosomal protein bS6 family.

In terms of biological role, binds together with bS18 to 16S ribosomal RNA. The protein is Small ribosomal subunit protein bS6 of Shewanella denitrificans (strain OS217 / ATCC BAA-1090 / DSM 15013).